A 370-amino-acid chain; its full sequence is Lipoyl synthase 1, chloroplastic (370 aa).

Disordered regions lie at residues 1-25 (MMQS…PVCR) and 39-67 (EAAP…KKPA). Residues 1-37 (MMQSSLARPLPRPPIRPACGNPVCRSRPGSVSVARCR) constitute a chloroplast transit peptide. [4Fe-4S] cluster is bound by residues cysteine 95, cysteine 100, cysteine 106, cysteine 132, cysteine 136, cysteine 139, and serine 347. One can recognise a Radical SAM core domain in the interval 115–336 (GEGDGIATAT…KEYGESVGFR (222 aa)).

The protein belongs to the radical SAM superfamily. Lipoyl synthase family. The cofactor is [4Fe-4S] cluster.

It localises to the plastid. The protein localises to the chloroplast. The enzyme catalyses [[Fe-S] cluster scaffold protein carrying a second [4Fe-4S](2+) cluster] + N(6)-octanoyl-L-lysyl-[protein] + 2 oxidized [2Fe-2S]-[ferredoxin] + 2 S-adenosyl-L-methionine + 4 H(+) = [[Fe-S] cluster scaffold protein] + N(6)-[(R)-dihydrolipoyl]-L-lysyl-[protein] + 4 Fe(3+) + 2 hydrogen sulfide + 2 5'-deoxyadenosine + 2 L-methionine + 2 reduced [2Fe-2S]-[ferredoxin]. Its pathway is protein modification; protein lipoylation via endogenous pathway; protein N(6)-(lipoyl)lysine from octanoyl-[acyl-carrier-protein]: step 2/2. In terms of biological role, catalyzes the radical-mediated insertion of two sulfur atoms into the C-6 and C-8 positions of the octanoyl moiety bound to the lipoyl domains of lipoate-dependent enzymes, thereby converting the octanoylated domains into lipoylated derivatives. In Oryza sativa subsp. indica (Rice), this protein is Lipoyl synthase 1, chloroplastic.